Here is a 58-residue protein sequence, read N- to C-terminus: Ranakinin-N (58 aa).

Residues 1–22 form the signal peptide; that stretch reads MFTMKKSLLLLFFLGTISMSLC. Positions 23–43 are excised as a propeptide; the sequence is EEKRDADEEETEGEAKMEDIK. A disordered region spans residues 25-58; sequence KRDADEEETEGEAKMEDIKRAEAVPPGFTPFRKP. The span at 35–46 shows a compositional bias: basic and acidic residues; it reads GEAKMEDIKRAE.

Expressed by the skin glands.

It localises to the secreted. Functionally, induces contraction of intestinal smooth muscle in isolated guinea pig ileum. May induce relaxation of arterial smooth muscle. May target bradykinin receptors (BDKRB). Lacks antibacterial activity against the Gram-positive bacterium S.aureus and the Gram-negative bacteria E.coli and B.dysenteria, and antifungal activity against C.albicans. In Hylarana nigrovittata (Black-striped frog), this protein is Ranakinin-N.